A 274-amino-acid polypeptide reads, in one-letter code: Thiamine kinase (274 aa).

This sequence belongs to the thiamine kinase family.

It catalyses the reaction thiamine + ATP = thiamine phosphate + ADP + H(+). It participates in cofactor biosynthesis; thiamine diphosphate biosynthesis; thiamine phosphate from thiamine: step 1/1. Functionally, catalyzes the ATP-dependent phosphorylation of thiamine to thiamine phosphate. Is involved in thiamine salvage. This is Thiamine kinase from Salmonella heidelberg (strain SL476).